The primary structure comprises 626 residues: DNA primase (626 aa).

A CHC2-type zinc finger spans residues 39-63; the sequence is CPFHGEKTPSFSVSPEKQIFHCFGC. The 83-residue stretch at 264 to 346 folds into the Toprim domain; it reads EEITLMEGFM…DVFVLQLPAG (83 aa). Residues E270, D314, and D316 each contribute to the Mg(2+) site.

This sequence belongs to the DnaG primase family. As to quaternary structure, monomer. Interacts with DnaB. Zn(2+) serves as cofactor. Requires Mg(2+) as cofactor.

The catalysed reaction is ssDNA + n NTP = ssDNA/pppN(pN)n-1 hybrid + (n-1) diphosphate.. Its function is as follows. RNA polymerase that catalyzes the synthesis of short RNA molecules used as primers for DNA polymerase during DNA replication. This Listeria monocytogenes serovar 1/2a (strain ATCC BAA-679 / EGD-e) protein is DNA primase.